The sequence spans 301 residues: uncharacterized protein (301 aa).

It belongs to the asfivirus E301R family. In terms of assembly, interacts with host IRF3.

Functionally, plays a role in the inhibition of host innate immune system by acting as a negatively regulator of type I interferon production. Mechanistically, interacts with and prevents host IRF3 nuclear localization to inhibit its transcriptional activity. This is an uncharacterized protein from African swine fever virus (strain Badajoz 1971 Vero-adapted) (Ba71V).